The sequence spans 335 residues: MSHPAIIALTPGEPAGIGPDLTVMAAQQARDYPLVALCDPQLLKDRAKLLGLPLTVSTYIQGSAVTTSAQHISVMPIPLGAPCEAGTLDSTNAAYVIETLKQATEGCLSGEFAAVVTGPVQKSVINEAGINFSGHTEYFADNSNTPRVVMMLATEGLRVALATTHLPLKDVSAAITTASLTETLNILLADLQLKFGLSQPRVLVCGLNPHAGEGGHLGMEEIDTIIPVLEQFRARGHNLVGPLPADTLFNPKYLSDADAVLAMYHDQGLPVLKYKGFGNAVNITLGLPFIRTSVDHGTALDLAGTGKANIGSLQVALGYAQNLAMQQASINEIAG.

Substrate contacts are provided by H135 and T136. A divalent metal cation-binding residues include H165, H210, and H265. 3 residues coordinate substrate: K273, N282, and R291.

The protein belongs to the PdxA family. In terms of assembly, homodimer. Requires Zn(2+) as cofactor. Mg(2+) is required as a cofactor. The cofactor is Co(2+).

It is found in the cytoplasm. It carries out the reaction 4-(phosphooxy)-L-threonine + NAD(+) = 3-amino-2-oxopropyl phosphate + CO2 + NADH. The protein operates within cofactor biosynthesis; pyridoxine 5'-phosphate biosynthesis; pyridoxine 5'-phosphate from D-erythrose 4-phosphate: step 4/5. Functionally, catalyzes the NAD(P)-dependent oxidation of 4-(phosphooxy)-L-threonine (HTP) into 2-amino-3-oxo-4-(phosphooxy)butyric acid which spontaneously decarboxylates to form 3-amino-2-oxopropyl phosphate (AHAP). This chain is 4-hydroxythreonine-4-phosphate dehydrogenase, found in Saccharophagus degradans (strain 2-40 / ATCC 43961 / DSM 17024).